A 73-amino-acid polypeptide reads, in one-letter code: Conotoxin Bt11.1 (73 aa).

A signal peptide spans 1–20 (MKLCVAFLLVLVILPSVIGG). A propeptide spanning residues 21 to 35 (KPSERTLSGATRRGD) is cleaved from the precursor. Intrachain disulfides connect Cys39–Cys53, Cys46–Cys58, Cys52–Cys63, and Cys57–Cys70.

The protein belongs to the conotoxin I1 superfamily. In terms of tissue distribution, expressed by the venom duct.

The protein localises to the secreted. This is Conotoxin Bt11.1 from Conus betulinus (Beech cone).